Here is a 353-residue protein sequence, read N- to C-terminus: Uroporphyrinogen decarboxylase (353 aa).

Substrate contacts are provided by residues 33–37 (RQAGR), Asp82, Tyr158, Ser213, and His332.

This sequence belongs to the uroporphyrinogen decarboxylase family. As to quaternary structure, homodimer.

It is found in the cytoplasm. The enzyme catalyses uroporphyrinogen III + 4 H(+) = coproporphyrinogen III + 4 CO2. It participates in porphyrin-containing compound metabolism; protoporphyrin-IX biosynthesis; coproporphyrinogen-III from 5-aminolevulinate: step 4/4. Functionally, catalyzes the decarboxylation of four acetate groups of uroporphyrinogen-III to yield coproporphyrinogen-III. The protein is Uroporphyrinogen decarboxylase of Gluconobacter oxydans (strain 621H) (Gluconobacter suboxydans).